We begin with the raw amino-acid sequence, 114 residues long: Ribonuclease P protein component (114 aa).

Belongs to the RnpA family. Consists of a catalytic RNA component (M1 or rnpB) and a protein subunit.

It carries out the reaction Endonucleolytic cleavage of RNA, removing 5'-extranucleotides from tRNA precursor.. RNaseP catalyzes the removal of the 5'-leader sequence from pre-tRNA to produce the mature 5'-terminus. It can also cleave other RNA substrates such as 4.5S RNA. The protein component plays an auxiliary but essential role in vivo by binding to the 5'-leader sequence and broadening the substrate specificity of the ribozyme. This chain is Ribonuclease P protein component, found in Buchnera aphidicola subsp. Schizaphis graminum (strain Sg).